Here is a 266-residue protein sequence, read N- to C-terminus: Type III pantothenate kinase (266 aa).

15–22 (EIGNSSTS) lines the ATP pocket. Substrate contacts are provided by residues Tyr105 and 112–115 (GADR). The active-site Proton acceptor is the Asp114. Asp135 serves as a coordination point for K(+). Thr138 lines the ATP pocket. Thr191 provides a ligand contact to substrate.

Belongs to the type III pantothenate kinase family. As to quaternary structure, homodimer. It depends on NH4(+) as a cofactor. Requires K(+) as cofactor.

The protein resides in the cytoplasm. It carries out the reaction (R)-pantothenate + ATP = (R)-4'-phosphopantothenate + ADP + H(+). The protein operates within cofactor biosynthesis; coenzyme A biosynthesis; CoA from (R)-pantothenate: step 1/5. In terms of biological role, catalyzes the phosphorylation of pantothenate (Pan), the first step in CoA biosynthesis. The sequence is that of Type III pantothenate kinase from Chlorobium chlorochromatii (strain CaD3).